A 329-amino-acid polypeptide reads, in one-letter code: Serine dehydratase-like (329 aa).

An N-acetylmethionine modification is found at Met-1. Lys-48 bears the N6-(pyridoxal phosphate)lysine mark.

It belongs to the serine/threonine dehydratase family. Monomer. Homodimer. Requires pyridoxal 5'-phosphate as cofactor. Abundantly expressed in liver.

It catalyses the reaction L-serine = pyruvate + NH4(+). The enzyme catalyses L-threonine = 2-oxobutanoate + NH4(+). The catalysed reaction is L-glutamate = D-glutamate. Catalyzes the pyridoxal-phosphate-dependent dehydrative deamination of L-threonine and L-serine to ammonia and alpha-ketobutyrate and pyruvate, respectively. Also exhibits racemase activity towards L-glutamate and D-glutamate. This chain is Serine dehydratase-like (Sdsl), found in Mus musculus (Mouse).